The primary structure comprises 194 residues: Potassium-transporting ATPase KdpC subunit (194 aa).

A helical membrane pass occupies residues 12 to 34 (LFLLLLTGGVYPLLTTALGQWWF).

This sequence belongs to the KdpC family. As to quaternary structure, the system is composed of three essential subunits: KdpA, KdpB and KdpC.

The protein localises to the cell inner membrane. Part of the high-affinity ATP-driven potassium transport (or Kdp) system, which catalyzes the hydrolysis of ATP coupled with the electrogenic transport of potassium into the cytoplasm. This subunit acts as a catalytic chaperone that increases the ATP-binding affinity of the ATP-hydrolyzing subunit KdpB by the formation of a transient KdpB/KdpC/ATP ternary complex. This is Potassium-transporting ATPase KdpC subunit from Salmonella heidelberg (strain SL476).